A 120-amino-acid polypeptide reads, in one-letter code: Large ribosomal subunit protein bL20 (120 aa).

Belongs to the bacterial ribosomal protein bL20 family.

In terms of biological role, binds directly to 23S ribosomal RNA and is necessary for the in vitro assembly process of the 50S ribosomal subunit. It is not involved in the protein synthesizing functions of that subunit. In Ureaplasma parvum serovar 3 (strain ATCC 27815 / 27 / NCTC 11736), this protein is Large ribosomal subunit protein bL20.